The following is a 148-amino-acid chain: Deoxyuridine 5'-triphosphate nucleotidohydrolase (148 aa).

Substrate contacts are provided by residues 68–70 (RSG), asparagine 81, 85–87 (TID), and lysine 95.

Belongs to the dUTPase family. Requires Mg(2+) as cofactor.

It catalyses the reaction dUTP + H2O = dUMP + diphosphate + H(+). The protein operates within pyrimidine metabolism; dUMP biosynthesis; dUMP from dCTP (dUTP route): step 2/2. Its function is as follows. This enzyme is involved in nucleotide metabolism: it produces dUMP, the immediate precursor of thymidine nucleotides and it decreases the intracellular concentration of dUTP so that uracil cannot be incorporated into DNA. This Rickettsia typhi (strain ATCC VR-144 / Wilmington) protein is Deoxyuridine 5'-triphosphate nucleotidohydrolase.